Here is a 468-residue protein sequence, read N- to C-terminus: Interleukin-6 receptor subunit alpha (468 aa).

A signal peptide spans 1–19 (MLAVGCALLAALLAAPGAA). Residues 20–365 (LAPRRCPAQE…VQDSSSVPLP (346 aa)) lie on the Extracellular side of the membrane. 4 cysteine pairs are disulfide-bonded: C25-C193, C47-C96, C121-C132, and C165-C176. The 87-residue stretch at 26–112 (PAQEVARGVL…AGTVHLLVDV (87 aa)) folds into the Ig-like C2-type domain. Residues N55 and N93 are each glycosylated (N-linked (GlcNAc...) asparagine). 2 consecutive Fibronectin type-III domains span residues 113 to 217 (PPEE…LQPD) and 218 to 316 (PPAN…TPWT). N-linked (GlcNAc...) asparagine glycosylation is found at N221 and N245. The WSXWS motif signature appears at 303 to 307 (WSEWS). The interval 303 to 328 (WSEWSPEAMGTPWTESRSPPAENEVS) is disordered. The N-linked (GlcNAc...) asparagine glycan is linked to N350. Residue T352 is glycosylated (O-linked (GlcNAc) threonine). The helical transmembrane segment at 366–386 (TFLVAGGSLAFGTLLCIAIVL) threads the bilayer. Topologically, residues 387–468 (RFKKTWKLRA…ISNTDYFFPR (82 aa)) are cytoplasmic. Pro residues predominate over residues 421–433 (TPVLVPLISPPVS). Residues 421-468 (TPVLVPLISPPVSPSSLGSDNTSSHNRPDARDPRSPYDISNTDYFFPR) form a disordered region. Residues 446–455 (NRPDARDPRS) show a composition bias toward basic and acidic residues. The span at 458-468 (DISNTDYFFPR) shows a compositional bias: polar residues.

The protein belongs to the type I cytokine receptor family. Type 3 subfamily. In terms of assembly, component of a hexamer of two molecules each of IL6, IL6R and IL6ST; first binds to IL6 to associate with the signaling subunit IL6ST. Interacts (via N-terminal ectodomain) with SORL1; this interaction may affect IL6-binding to IL6R, hence decrease IL6 'classic-signaling'. As to quaternary structure, also interacts with SORL1; this interaction leads to soluble IL6R internalization. May form a trimeric complex with the soluble SORL1 ectodomain and circulating IL6 receptor; this interaction might stabilize circulating IL6, hence promote IL6 'trans-signaling,. In terms of processing, a short soluble form is released from the membrane by proteolysis. The sIL6R is formed mostly by limited proteolysis of membrane-bound receptors, a process referred to as ectodomain shedding, but is also directly secreted from the cells after alternative mRNA splicing. mIL6R is cleaved by the proteases ADAM10 and ADAM17. Glycosylated. Glycosylation is dispensable for transport, signaling, and cell-surface turnover. Glycosylation at Asn-55 is a protease-regulatory exosite. Glycosylation is required for ADAM17-mediated proteolysis. Expressed in peripheral blood mononuclear cells and weakly found in urine and serum. 1%-20% of the total sIL6R in plasma is generated by alternative splicing.

Its subcellular location is the cell membrane. It localises to the secreted. With respect to regulation, classic and trans-signaling are both inhibited by tocilizumab, a humanized monoclonal antibody that blocks interleukin IL6R signaling. In terms of biological role, part of the receptor for interleukin 6. Binds to IL6 with low affinity, but does not transduce a signal. Signal activation necessitate an association with IL6ST. Activation leads to the regulation of the immune response, acute-phase reactions and hematopoiesis. The interaction with membrane-bound IL6R and IL6ST stimulates 'classic signaling', the restricted expression of the IL6R limits classic IL6 signaling to only a few tissues such as the liver and some cells of the immune system. Whereas the binding of IL6 and soluble IL6R to IL6ST stimulates 'trans-signaling'. Alternatively, 'cluster signaling' occurs when membrane-bound IL6:IL6R complexes on transmitter cells activate IL6ST receptors on neighboring receiver cells. Its function is as follows. Signaling via the membrane-bound IL6R is mostly regenerative and anti-inflammatory. Drives naive CD4(+) T cells to the Th17 lineage, through 'cluster signaling' by dendritic cells. Functionally, soluble form of IL6 receptor (sIL6R) that acts as an agonist of IL6 activity. The IL6:sIL6R complex (hyper-IL6) binds to IL6ST/gp130 on cell surfaces and induces signaling also on cells that do not express membrane-bound IL6R in a process called IL6 'trans-signaling'. sIL6R is causative for the pro-inflammatory properties of IL6 and an important player in the development of chronic inflammatory diseases. In complex with IL6, is required for induction of VEGF production. Plays a protective role during liver injury, being required for maintenance of tissue regeneration. 'Trans-signaling' in central nervous system regulates energy and glucose homeostasis. The chain is Interleukin-6 receptor subunit alpha from Homo sapiens (Human).